A 466-amino-acid chain; its full sequence is Asparagine--tRNA ligase (466 aa).

Belongs to the class-II aminoacyl-tRNA synthetase family. Homodimer.

It is found in the cytoplasm. It catalyses the reaction tRNA(Asn) + L-asparagine + ATP = L-asparaginyl-tRNA(Asn) + AMP + diphosphate + H(+). The protein is Asparagine--tRNA ligase of Aliivibrio fischeri (strain ATCC 700601 / ES114) (Vibrio fischeri).